Reading from the N-terminus, the 183-residue chain is Microfibrillar-associated protein 2 (183 aa).

Residues M1–A17 constitute a signal peptide (or 19). Position 18 is a pyrrolidone carboxylic acid (Q18). Residues Y47, Y48, and Y50 each carry the sulfotyrosine modification. Residues S58 to P94 form a disordered region. Positions E60 to V74 are enriched in low complexity. The 31-residue stretch at C153 to C183 folds into the ShKT domain. 3 cysteine pairs are disulfide-bonded: C153–C183, C160–C176, and C169–C180.

The protein belongs to the MFAP family. In terms of assembly, forms a ternary complex with BGN and ELN. Interacts with FBN1 (via N-terminal domain) and FBN2. Forms intermolecular disulfide bonds either with other MAGP-1 molecules or with other components of the microfibrils. May form transglutaminase cross-links. Post-translationally, O-glycosylated.

The protein resides in the secreted. Its subcellular location is the extracellular space. It localises to the extracellular matrix. Component of the elastin-associated microfibrils. The sequence is that of Microfibrillar-associated protein 2 (MFAP2) from Homo sapiens (Human).